A 207-amino-acid polypeptide reads, in one-letter code: Adenine phosphoribosyltransferase (207 aa).

The disordered stretch occupies residues 1–33; it reads MRPAKPPQSKERKRSKSLTSADHDNSPQRAETA.

The protein belongs to the purine/pyrimidine phosphoribosyltransferase family. In terms of assembly, homodimer.

The protein localises to the cytoplasm. It carries out the reaction AMP + diphosphate = 5-phospho-alpha-D-ribose 1-diphosphate + adenine. The protein operates within purine metabolism; AMP biosynthesis via salvage pathway; AMP from adenine: step 1/1. Its function is as follows. Catalyzes a salvage reaction resulting in the formation of AMP, that is energically less costly than de novo synthesis. This Corynebacterium jeikeium (strain K411) protein is Adenine phosphoribosyltransferase.